Here is a 101-residue protein sequence, read N- to C-terminus: MISIIIAYATPEKQVEIPLTVEESCTLVVAVKRSGILQQFPEINLSQAIVGIHNKRTALDAGLRDDDRIEIYRPLTMDPKQARLLRAKRGKIRRMVRGEAG.

It belongs to the UPF0125 (RnfH) family.

The chain is Protein RnfH from Coxiella burnetii (strain RSA 331 / Henzerling II).